Reading from the N-terminus, the 78-residue chain is Large ribosomal subunit protein bL28 (78 aa).

The tract at residues 1–23 (MSRVCQVSGKRVQTGNNVSHANN) is disordered. The span at 11 to 22 (RVQTGNNVSHAN) shows a compositional bias: polar residues.

Belongs to the bacterial ribosomal protein bL28 family.

The chain is Large ribosomal subunit protein bL28 from Stenotrophomonas maltophilia (strain R551-3).